The sequence spans 195 residues: PRS fimbrial minor pilin protein (195 aa).

Positions 1 to 22 are cleaved as a signal peptide; that stretch reads MRLRFSVPLFFFGCVFVHGVFA. A disulfide bridge links Cys-58 with Cys-97.

The protein belongs to the fimbrial protein family.

It localises to the secreted. Its subcellular location is the fimbrium. Its function is as follows. Fimbriae (also called pili), polar filaments radiating from the surface of the bacterium to a length of 0.5-1.5 micrometers and numbering 100-300 per cell, enable bacteria to colonize the epithelium of specific host organs. In terms of biological role, seems to anchor the pilus to the bacterial cell. In addition the stoichiometric relationship between PrsH and PrsA determines the pilus length. This chain is PRS fimbrial minor pilin protein (prsH), found in Escherichia coli.